Here is a 93-residue protein sequence, read N- to C-terminus: Small ribosomal subunit protein uS19 (93 aa).

Belongs to the universal ribosomal protein uS19 family.

Functionally, protein S19 forms a complex with S13 that binds strongly to the 16S ribosomal RNA. The polypeptide is Small ribosomal subunit protein uS19 (Campylobacter lari (strain RM2100 / D67 / ATCC BAA-1060)).